The primary structure comprises 396 residues: Putative pyridoxal phosphate-dependent acyltransferase (396 aa).

111-112 is a pyridoxal 5'-phosphate binding site; it reads GF. His136 provides a ligand contact to substrate. Pyridoxal 5'-phosphate contacts are provided by residues Ser186, 211–214, and 241–244; these read DDAH and TLSK. Lys244 carries the N6-(pyridoxal phosphate)lysine modification. A substrate-binding site is contributed by Thr358.

Belongs to the class-II pyridoxal-phosphate-dependent aminotransferase family. As to quaternary structure, homodimer. It depends on pyridoxal 5'-phosphate as a cofactor.

The chain is Putative pyridoxal phosphate-dependent acyltransferase from Bacillus cereus (strain ATCC 14579 / DSM 31 / CCUG 7414 / JCM 2152 / NBRC 15305 / NCIMB 9373 / NCTC 2599 / NRRL B-3711).